Reading from the N-terminus, the 272-residue chain is Insulin-like growth factor-binding protein 1 (272 aa).

Positions 1 to 25 (MPEFLTVVSWPFLILLSFQVRVVAG) are cleaved as a signal peptide. The region spanning 28-109 (QPWHCAPCTA…TRGQGACVLE (82 aa)) is the IGFBP N-terminal domain. Disulfide bonds link cysteine 32–cysteine 59, cysteine 35–cysteine 61, cysteine 43–cysteine 62, cysteine 50–cysteine 65, cysteine 73–cysteine 86, and cysteine 80–cysteine 106. A disordered region spans residues 115 to 143 (TSSLSGSQHEEAKAAVASEDELAESPEMT). The segment covering 132 to 143 (SEDELAESPEMT) has biased composition (acidic residues). Phosphoserine occurs at positions 139, 157, and 169. Residue threonine 170 is modified to Phosphothreonine. Residue tyrosine 171 is modified to Phosphotyrosine. A Thyroglobulin type-1 domain is found at 186–264 (KEPCQRELYK…SLETRGDPNC (79 aa)). 3 cysteine pairs are disulfide-bonded: cysteine 189/cysteine 219, cysteine 230/cysteine 241, and cysteine 243/cysteine 264. Serine 255 carries the post-translational modification Phosphoserine. The Cell attachment site motif lies at 259 to 261 (RGD).

Binds equally well IGF1 and IGF2. Interacts with integrin ITGA5:ITGB1. Interacts with VHL; this interaction inhibits HIF1A degradation.

The protein resides in the secreted. Multifunctional protein that plays a critical role in regulating the availability of IGFs such as IGF1 and IGF2 to their receptors and thereby regulates IGF-mediated cellular processes including cell migration, proliferation, differentiation or apoptosis in a cell-type specific manner. Also plays a positive role in cell migration by interacting with integrin ITGA5:ITGB1 through its RGD motif. Mechanistically, binding to integrins leads to activation of focal adhesion kinase/PTK2 and stimulation of the mitogen-activated protein kinase (MAPK) pathway. Regulates cardiomyocyte apoptosis by suppressing HIF-1alpha/HIF1A ubiquitination and subsequent degradation. The polypeptide is Insulin-like growth factor-binding protein 1 (Igfbp1) (Rattus norvegicus (Rat)).